The chain runs to 99 residues: Protein Tat (99 aa).

Residues 1 to 22 (MDPVDPNLEPWNHPGSQPRTPC) are disordered. The interaction with human CREBBP stretch occupies residues 1-24 (MDPVDPNLEPWNHPGSQPRTPCNK). The tract at residues 1–48 (MDPVDPNLEPWNHPGSQPRTPCNKCHCKKCCYHCPVCFLNKGLGISYG) is transactivation. Residues C22, C25, and C27 each coordinate Zn(2+). A cysteine-rich region spans residues 22 to 37 (CNKCHCKKCCYHCPVC). K28 is subject to N6-acetyllysine; by host PCAF. C30, H33, C34, and C37 together coordinate Zn(2+). The interval 38 to 48 (FLNKGLGISYG) is core. Residues 48–99 (GRKKRRQRRGPPQGGQAHQVPIPKQPSSQPRGDPTGPKEQKKKVESEAETDP) form a disordered region. The Nuclear localization signal, RNA-binding (TAR), and protein transduction motif lies at 49–57 (RKKRRQRRG). Residues 49 to 86 (RKKRRQRRGPPQGGQAHQVPIPKQPSSQPRGDPTGPKE) are interaction with the host capping enzyme RNGTT. K50 and K51 each carry N6-acetyllysine; by host EP300 and GCN5L2. Residues R52 and R53 each carry the asymmetric dimethylarginine; by host PRMT6 modification. K71 is covalently cross-linked (Glycyl lysine isopeptide (Lys-Gly) (interchain with G-Cter in ubiquitin)). The Cell attachment site signature appears at 78–80 (RGD). Residues 83–93 (GPKEQKKKVES) are compositionally biased toward basic and acidic residues.

The protein belongs to the lentiviruses Tat family. As to quaternary structure, interacts with host CCNT1. Associates with the P-TEFb complex composed at least of Tat, P-TEFb (CDK9 and CCNT1), TAR RNA, RNA Pol II. Recruits the HATs CREBBP, TAF1/TFIID, EP300, PCAF and GCN5L2. Interacts with host KAT5/Tip60; this interaction targets the latter to degradation. Interacts with the host deacetylase SIRT1. Interacts with host capping enzyme RNGTT; this interaction stimulates RNGTT. Binds to host KDR, and to the host integrins ITGAV/ITGB3 and ITGA5/ITGB1. Interacts with host KPNB1/importin beta-1 without previous binding to KPNA1/importin alpha-1. Interacts with EIF2AK2. Interacts with host nucleosome assembly protein NAP1L1; this interaction may be required for the transport of Tat within the nucleus, since the two proteins interact at the nuclear rim. Interacts with host C1QBP/SF2P32; this interaction involves lysine-acetylated Tat. Interacts with the host chemokine receptors CCR2, CCR3 and CXCR4. Interacts with host DPP4/CD26; this interaction may trigger an anti-proliferative effect. Interacts with host LDLR. Interacts with the host extracellular matrix metalloproteinase MMP1. Interacts with host PRMT6; this interaction mediates Tat's methylation. Interacts with, and is ubiquitinated by MDM2/Hdm2. Interacts with host PSMC3 and HTATIP2. Interacts with STAB1; this interaction may overcome SATB1-mediated repression of IL2 and IL2RA (interleukin) in T cells by binding to the same domain than HDAC1. Interacts (when acetylated) with human CDK13, thereby increasing HIV-1 mRNA splicing and promoting the production of the doubly spliced HIV-1 protein Nef. Interacts with host TBP; this interaction modulates the activity of transcriptional pre-initiation complex. Interacts with host RELA. Interacts with host PLSCR1; this interaction negatively regulates Tat transactivation activity by altering its subcellular distribution. In terms of processing, asymmetrical arginine methylation by host PRMT6 seems to diminish the transactivation capacity of Tat and affects the interaction with host CCNT1. Post-translationally, acetylation by EP300, CREBBP, GCN5L2/GCN5 and PCAF regulates the transactivation activity of Tat. EP300-mediated acetylation of Lys-50 promotes dissociation of Tat from the TAR RNA through the competitive binding to PCAF's bromodomain. In addition, the non-acetylated Tat's N-terminus can also interact with PCAF. PCAF-mediated acetylation of Lys-28 enhances Tat's binding to CCNT1. Lys-50 is deacetylated by SIRT1. Polyubiquitination by host MDM2 does not target Tat to degradation, but activates its transactivation function and fosters interaction with CCNT1 and TAR RNA. In terms of processing, phosphorylated by EIF2AK2 on serine and threonine residues adjacent to the basic region important for TAR RNA binding and function. Phosphorylation of Tat by EIF2AK2 is dependent on the prior activation of EIF2AK2 by dsRNA.

Its subcellular location is the host nucleus. The protein localises to the host nucleolus. It is found in the host cytoplasm. The protein resides in the secreted. Transcriptional activator that increases RNA Pol II processivity, thereby increasing the level of full-length viral transcripts. Recognizes a hairpin structure at the 5'-LTR of the nascent viral mRNAs referred to as the transactivation responsive RNA element (TAR) and recruits the cyclin T1-CDK9 complex (P-TEFb complex) that will in turn hyperphosphorylate the RNA polymerase II to allow efficient elongation. The CDK9 component of P-TEFb and other Tat-activated kinases hyperphosphorylate the C-terminus of RNA Pol II that becomes stabilized and much more processive. Other factors such as HTATSF1/Tat-SF1, SUPT5H/SPT5, and HTATIP2 are also important for Tat's function. Besides its effect on RNA Pol II processivity, Tat induces chromatin remodeling of proviral genes by recruiting the histone acetyltransferases (HATs) CREBBP, EP300 and PCAF to the chromatin. This also contributes to the increase in proviral transcription rate, especially when the provirus integrates in transcriptionally silent region of the host genome. To ensure maximal activation of the LTR, Tat mediates nuclear translocation of NF-kappa-B by interacting with host RELA. Through its interaction with host TBP, Tat may also modulate transcription initiation. Tat can reactivate a latently infected cell by penetrating in it and transactivating its LTR promoter. In the cytoplasm, Tat is thought to act as a translational activator of HIV-1 mRNAs. Its function is as follows. Extracellular circulating Tat can be endocytosed by surrounding uninfected cells via the binding to several surface receptors such as CD26, CXCR4, heparan sulfate proteoglycans (HSPG) or LDLR. Neurons are rarely infected, but they internalize Tat via their LDLR. Through its interaction with nuclear HATs, Tat is potentially able to control the acetylation-dependent cellular gene expression. Modulates the expression of many cellular genes involved in cell survival, proliferation or in coding for cytokines or cytokine receptors. Tat plays a role in T-cell and neurons apoptosis. Tat induced neurotoxicity and apoptosis probably contribute to neuroAIDS. Circulating Tat also acts as a chemokine-like and/or growth factor-like molecule that binds to specific receptors on the surface of the cells, affecting many cellular pathways. In the vascular system, Tat binds to ITGAV/ITGB3 and ITGA5/ITGB1 integrins dimers at the surface of endothelial cells and competes with bFGF for heparin-binding sites, leading to an excess of soluble bFGF. In Homo sapiens (Human), this protein is Protein Tat.